A 239-amino-acid chain; its full sequence is tRNA (guanine-N(1)-)-methyltransferase (239 aa).

Residues glycine 113 and 137–142 (LGDYVL) each bind S-adenosyl-L-methionine.

This sequence belongs to the RNA methyltransferase TrmD family. As to quaternary structure, homodimer.

Its subcellular location is the cytoplasm. The enzyme catalyses guanosine(37) in tRNA + S-adenosyl-L-methionine = N(1)-methylguanosine(37) in tRNA + S-adenosyl-L-homocysteine + H(+). In terms of biological role, specifically methylates guanosine-37 in various tRNAs. The sequence is that of tRNA (guanine-N(1)-)-methyltransferase from Cutibacterium acnes (strain DSM 16379 / KPA171202) (Propionibacterium acnes).